Here is a 63-residue protein sequence, read N- to C-terminus: Large ribosomal subunit protein bL32 (63 aa).

The protein belongs to the bacterial ribosomal protein bL32 family.

In Acholeplasma laidlawii, this protein is Large ribosomal subunit protein bL32.